A 103-amino-acid chain; its full sequence is Cell division protein FtsB (103 aa).

Over 1 to 3 (MGK) the chain is Cytoplasmic. The helical transmembrane segment at 4 to 21 (LTLLLLAILVWLQYSLWF) threads the bilayer. Over 22 to 103 (GKNGIHDYTR…RAQSAGQNNR (82 aa)) the chain is Periplasmic. A coiled-coil region spans residues 31-71 (RVNDDVAAQQATNAKLKARNDQLFAEIDDLNGGQEALEERA).

The protein belongs to the FtsB family. In terms of assembly, part of a complex composed of FtsB, FtsL and FtsQ.

The protein resides in the cell inner membrane. Essential cell division protein. May link together the upstream cell division proteins, which are predominantly cytoplasmic, with the downstream cell division proteins, which are predominantly periplasmic. This is Cell division protein FtsB from Shigella boydii serotype 18 (strain CDC 3083-94 / BS512).